The sequence spans 380 residues: Cytochrome b (380 aa).

The next 4 membrane-spanning stretches (helical) occupy residues 34–54, 78–99, 114–134, and 179–199; these read FGSL…LLAM, WLIR…YLHI, WNTG…GYVL, and FFAL…IHLT. Heme b-binding residues include His84 and His98. The heme b site is built by His183 and His197. Residue His202 coordinates a ubiquinone. The next 4 membrane-spanning stretches (helical) occupy residues 227-247, 289-309, 321-341, and 348-368; these read LKDI…ALFS, LGGV…PFLH, ISQL…WVGS, and FIII…ILFP.

The protein belongs to the cytochrome b family. In terms of assembly, the cytochrome bc1 complex contains 11 subunits: 3 respiratory subunits (MT-CYB, CYC1 and UQCRFS1), 2 core proteins (UQCRC1 and UQCRC2) and 6 low-molecular weight proteins (UQCRH/QCR6, UQCRB/QCR7, UQCRQ/QCR8, UQCR10/QCR9, UQCR11/QCR10 and a cleavage product of UQCRFS1). This cytochrome bc1 complex then forms a dimer. The cofactor is heme b.

It is found in the mitochondrion inner membrane. Its function is as follows. Component of the ubiquinol-cytochrome c reductase complex (complex III or cytochrome b-c1 complex) that is part of the mitochondrial respiratory chain. The b-c1 complex mediates electron transfer from ubiquinol to cytochrome c. Contributes to the generation of a proton gradient across the mitochondrial membrane that is then used for ATP synthesis. This is Cytochrome b (MT-CYB) from Puffinus opisthomelas (Black-vented shearwater).